A 556-amino-acid chain; its full sequence is Aplysianin-A (556 aa).

The signal sequence occupies residues 1–19 (MAVRFLALGLLIFVTSCSG). N-linked (GlcNAc...) asparagine glycans are attached at residues Asn-150, Asn-177, Asn-374, Asn-399, Asn-414, and Asn-430.

The protein to A.fulica achacin protein. In terms of assembly, homotetramer. Albumen gland.

In terms of biological role, has antibacterial activity against Gram-negative and Gram-positive bacteria. The sequence is that of Aplysianin-A from Aplysia kurodai (Kuroda's sea hare).